The chain runs to 160 residues: Phosphopantetheine adenylyltransferase (160 aa).

Ser9 is a binding site for substrate. ATP-binding positions include Ser9–Phe10 and His17. Residues Lys41, Leu73, and Lys87 each contribute to the substrate site. Residues Gly88–Arg90, Glu98, and Tyr123–Ser129 contribute to the ATP site.

It belongs to the bacterial CoaD family. In terms of assembly, homohexamer. It depends on Mg(2+) as a cofactor.

It is found in the cytoplasm. It catalyses the reaction (R)-4'-phosphopantetheine + ATP + H(+) = 3'-dephospho-CoA + diphosphate. It participates in cofactor biosynthesis; coenzyme A biosynthesis; CoA from (R)-pantothenate: step 4/5. Functionally, reversibly transfers an adenylyl group from ATP to 4'-phosphopantetheine, yielding dephospho-CoA (dPCoA) and pyrophosphate. The chain is Phosphopantetheine adenylyltransferase from Caldanaerobacter subterraneus subsp. tengcongensis (strain DSM 15242 / JCM 11007 / NBRC 100824 / MB4) (Thermoanaerobacter tengcongensis).